The primary structure comprises 236 residues: 5'-methylthioadenosine/S-adenosylhomocysteine nucleosidase (236 aa).

Glutamate 12 acts as the Proton acceptor in catalysis. Substrate contacts are provided by residues glycine 78, isoleucine 153, and 174 to 175; that span reads ME. The active-site Proton donor is the aspartate 198.

Belongs to the PNP/UDP phosphorylase family. MtnN subfamily.

It catalyses the reaction S-adenosyl-L-homocysteine + H2O = S-(5-deoxy-D-ribos-5-yl)-L-homocysteine + adenine. The catalysed reaction is S-methyl-5'-thioadenosine + H2O = 5-(methylsulfanyl)-D-ribose + adenine. The enzyme catalyses 5'-deoxyadenosine + H2O = 5-deoxy-D-ribose + adenine. It functions in the pathway amino-acid biosynthesis; L-methionine biosynthesis via salvage pathway; S-methyl-5-thio-alpha-D-ribose 1-phosphate from S-methyl-5'-thioadenosine (hydrolase route): step 1/2. In terms of biological role, catalyzes the irreversible cleavage of the glycosidic bond in both 5'-methylthioadenosine (MTA) and S-adenosylhomocysteine (SAH/AdoHcy) to adenine and the corresponding thioribose, 5'-methylthioribose and S-ribosylhomocysteine, respectively. Also cleaves 5'-deoxyadenosine, a toxic by-product of radical S-adenosylmethionine (SAM) enzymes, into 5-deoxyribose and adenine. The sequence is that of 5'-methylthioadenosine/S-adenosylhomocysteine nucleosidase from Shewanella sp. (strain MR-7).